We begin with the raw amino-acid sequence, 198 residues long: uncharacterized protein (198 aa).

Disordered stretches follow at residues 15 to 69 (RLGQ…KDTR) and 172 to 198 (FSVKESSNLSNNDSDASLDEDTLLWGL). Composition is skewed to basic and acidic residues over residues 37 to 49 (HKSFENLGRDQSR) and 56 to 69 (FNEKQSTEPPKDTR). Residues 176–186 (ESSNLSNNDSD) are compositionally biased toward low complexity. Acidic residues predominate over residues 187 to 198 (ASLDEDTLLWGL).

Its subcellular location is the nucleus. This is an uncharacterized protein from Schizosaccharomyces pombe (strain 972 / ATCC 24843) (Fission yeast).